Reading from the N-terminus, the 1194-residue chain is ATP-dependent RNA helicase DHX30 (1194 aa).

The segment covering 1–10 has biased composition (basic and acidic residues); that stretch reads MFSLDSFRKD. Residues 1–27 are disordered; that stretch reads MFSLDSFRKDRAQHRQRQCKLPPPRLP. S6 bears the Phosphoserine mark. Residues 53-121 enclose the DRBM domain; that stretch reads PKNLLNSVIG…QAAAAACQLF (69 aa). Positions 150 to 199 are disordered; it reads ADSWWRPEPTMPPTSWRQLNPESIRPGGPGGLSRSLGREEEEDEEEELEE. Over residues 188–199 the composition is skewed to acidic residues; that stretch reads EEEEDEEEELEE. Phosphoserine occurs at positions 226 and 380. Positions 444-612 constitute a Helicase ATP-binding domain; that stretch reads LNAIEQHPVV…FGGCPVIKVP (169 aa). 457–464 contacts ATP; the sequence is GDTGCGKT. The short motif at 559–562 is the DEAH box element; it reads DEVH. One can recognise a Helicase C-terminal domain in the interval 654 to 827; the sequence is LVTDLVLHID…NLVLQAKIHM (174 aa).

The protein belongs to the DEAD box helicase family. DEAH subfamily. As to quaternary structure, identified in a complex with TFAM and SSBP1. Interacts (via N-terminus) with ZC3HAV1 (via N-terminal domain) in an RNA-independent manner. Found in a complex with GRSF1, DDX28, FASTKD2 and FASTKD5.

The protein resides in the cytoplasm. It is found in the mitochondrion. It localises to the mitochondrion matrix. Its subcellular location is the mitochondrion nucleoid. It catalyses the reaction ATP + H2O = ADP + phosphate + H(+). In terms of biological role, RNA-dependent helicase. Plays an important role in the assembly of the mitochondrial large ribosomal subunit. Required for optimal function of the zinc-finger antiviral protein ZC3HAV1. Associates with mitochondrial DNA. Involved in nervous system development and differentiation through its involvement in the up-regulation of a number of genes which are required for neurogenesis, including GSC, NCAM1, neurogenin, and NEUROD. The protein is ATP-dependent RNA helicase DHX30 (DHX30) of Pongo abelii (Sumatran orangutan).